A 260-amino-acid polypeptide reads, in one-letter code: Arginine esterase (260 aa).

A signal peptide spans Met1–Ala17. Positions Glu18–Arg24 are cleaved as a propeptide — activation peptide. In terms of domain architecture, Peptidase S1 spans Ile25–Lys257. 5 cysteine pairs are disulfide-bonded: Cys31–Cys172, Cys50–Cys66, Cys151–Cys218, Cys183–Cys197, and Cys208–Cys233. The active-site Charge relay system is the His65. Residue Asn79 is glycosylated (N-linked (GlcNAc...) asparagine). Asp119 (charge relay system) is an active-site residue. Catalysis depends on Ser212, which acts as the Charge relay system.

This sequence belongs to the peptidase S1 family. Kallikrein subfamily.

It carries out the reaction Preferential cleavage of Arg-|-Xaa bonds in small molecule substrates. Highly selective action to release kallidin (lysyl-bradykinin) from kininogen involves hydrolysis of Met-|-Xaa or Leu-|-Xaa.. In terms of biological role, this serine protease is found in dog seminal plasma, its exact physiological function is not known. The sequence is that of Arginine esterase from Canis lupus familiaris (Dog).